The following is a 422-amino-acid chain: 5-hydroxytryptamine receptor 1A (422 aa).

A disordered region spans residues 1–23; the sequence is MDVLSPGQGNNTTSPPAPFETGG. Residues 1–38 are Extracellular-facing; the sequence is MDVLSPGQGNNTTSPPAPFETGGNTTGISDVTFSYQVI. N10, N11, and N24 each carry an N-linked (GlcNAc...) asparagine glycan. A helical transmembrane segment spans residues 39 to 59; the sequence is TSLLLGTLIFCAVLGNACVVA. The Cytoplasmic portion of the chain corresponds to 60 to 73; the sequence is AIALERSLQNVANY. Residues 74–98 form a helical membrane-spanning segment; that stretch reads LIGSLAVTDLMVSVLVLPMAALYQV. The Extracellular segment spans residues 99–107; the sequence is LNKWTLGQV. The helical transmembrane segment at 108 to 132 threads the bilayer; that stretch reads TCDLFIALDVLCCTSSILHLCAIAL. C109 and C187 are joined by a disulfide. Positions 116 and 120 each coordinate serotonin. The short motif at 133–135 is the DRY motif; important for ligand-induced conformation changes element; it reads DRY. Topologically, residues 133–152 are cytoplasmic; it reads DRYWAITDPIDYVNKRTPRR. A helical transmembrane segment spans residues 153–174; sequence AAALISLTWLIGFLISIPPMLG. The Extracellular segment spans residues 175–193; the sequence is WRTPEDRSDPDACTISKDH. A helical membrane pass occupies residues 194-216; that stretch reads GYTIYSTFGAFYIPLLLMLVLYG. The Cytoplasmic segment spans residues 217–346; it reads RIFRAARFRI…LARERKTVKT (130 aa). The interval 235 to 262 is disordered; the sequence is KTGADTRHGASPAPQPKKSVNGESGSRN. 1D-myo-inositol 4-phosphate is bound by residues T314, K345, T346, and G352. Residues 347–370 traverse the membrane as a helical segment; the sequence is LGIIMGTFILCWLPFFIVALVLPF. Residues 371–378 are Extracellular-facing; the sequence is CESSCHMP. The chain crosses the membrane as a helical span at residues 379-403; that stretch reads TLLGAIINWLGYSNSLLNPVIYAYF. The short motif at 396–400 is the NPxxY motif; important for ligand-induced conformation changes and signaling element; that stretch reads NPVIY. 1D-myo-inositol 4-phosphate contacts are provided by F403, N404, and K405. Residues 404 to 422 lie on the Cytoplasmic side of the membrane; it reads NKDFQNAFKKIIKCKFCRQ.

Belongs to the G-protein coupled receptor 1 family. 5-hydroxytryptamine receptor subfamily. HTR1A sub-subfamily. In terms of assembly, heterodimer; heterodimerizes with GPER1. Interacts with YIF1B. Interacts with GPR39 and GALR1.

The protein resides in the cell membrane. Its subcellular location is the cell projection. It localises to the dendrite. Its activity is regulated as follows. G-protein coupled receptor activity is regulated by lipids: phosphatidylinositol 4-phosphate increases HTR1A-mediated activity. G-protein coupled receptor for 5-hydroxytryptamine (serotonin). Also functions as a receptor for various drugs and psychoactive substances. Ligand binding causes a conformation change that triggers signaling via guanine nucleotide-binding proteins (G proteins) and modulates the activity of downstream effectors, such as adenylate cyclase. HTR1A is coupled to G(i)/G(o) G alpha proteins and mediates inhibitory neurotransmission: signaling inhibits adenylate cyclase activity and activates a phosphatidylinositol-calcium second messenger system that regulates the release of Ca(2+) ions from intracellular stores. Beta-arrestin family members regulate signaling by mediating both receptor desensitization and resensitization processes. This Gorilla gorilla gorilla (Western lowland gorilla) protein is 5-hydroxytryptamine receptor 1A (HTR1A).